A 114-amino-acid chain; its full sequence is Small ribosomal subunit protein bS6 (114 aa).

Belongs to the bacterial ribosomal protein bS6 family.

Functionally, binds together with bS18 to 16S ribosomal RNA. This chain is Small ribosomal subunit protein bS6, found in Bacteroides fragilis (strain YCH46).